The following is a 1235-amino-acid chain: DNA polymerase (1235 aa).

In terms of domain architecture, DOD-type homing endonuclease spans Leu773–Val887.

This sequence belongs to the DNA polymerase type-B family. This protein undergoes a protein self splicing that involves a post-translational excision of the intervening region (intein) followed by peptide ligation.

The catalysed reaction is DNA(n) + a 2'-deoxyribonucleoside 5'-triphosphate = DNA(n+1) + diphosphate. This Pyrococcus horikoshii (strain ATCC 700860 / DSM 12428 / JCM 9974 / NBRC 100139 / OT-3) protein is DNA polymerase (pol).